We begin with the raw amino-acid sequence, 214 residues long: Probable GTP-binding protein EngB (214 aa).

The region spanning 22–194 (NLPEIAFAGR…WARIDALLSP (173 aa)) is the EngB-type G domain. GTP-binding positions include 30–37 (GRSNVGKS), 57–61 (GRTQL), 75–78 (DLPG), 142–145 (TKCD), and 173–175 (FSA). Residues serine 37 and threonine 59 each coordinate Mg(2+).

The protein belongs to the TRAFAC class TrmE-Era-EngA-EngB-Septin-like GTPase superfamily. EngB GTPase family. Mg(2+) is required as a cofactor.

Its function is as follows. Necessary for normal cell division and for the maintenance of normal septation. This is Probable GTP-binding protein EngB from Citrifermentans bemidjiense (strain ATCC BAA-1014 / DSM 16622 / JCM 12645 / Bem) (Geobacter bemidjiensis).